The chain runs to 120 residues: Large ribosomal subunit protein uL18 (120 aa).

The protein belongs to the universal ribosomal protein uL18 family. As to quaternary structure, part of the 50S ribosomal subunit; part of the 5S rRNA/L5/L18/L25 subcomplex. Contacts the 5S and 23S rRNAs.

Functionally, this is one of the proteins that bind and probably mediate the attachment of the 5S RNA into the large ribosomal subunit, where it forms part of the central protuberance. The polypeptide is Large ribosomal subunit protein uL18 (Bradyrhizobium sp. (strain BTAi1 / ATCC BAA-1182)).